Reading from the N-terminus, the 56-residue chain is MYFTSRFLSALGTSNTLAVRCMTVKMNAVDAELYRPRFIFCATSHFVRHTTLFTLS.

This is an uncharacterized protein from Lepidoptera (butterflies and moths).